The primary structure comprises 851 residues: MTVASDDSPKEARGIPFLDQKSRKLANELLEPCLPFIQFNLGEIEQRAKHYLNTVPTSKDGNTKAHYLLAGSGINAEQTWKKIESLSLQVRPPTTLELSFTDVDMFLKYHREKNVLNSLEALVQNTQIAFDQYLEEEWRSKAAKSRPSFDNILLENKKRVSFYPFSVQRSQKFASTLKMCLEEEALHGFQSKLVSSFCEVAREFAHDTKSLLLYESWKLLSSVILDKDSVTVFGNKGIISKAFDIETEDGSVNSRFYQRISDCSRKFLEAQFFEVLNKEIAKTPQAALVGGVPSIRNKIRAYLNIRLLRNGVWINPDLEIIQDVPIWAFIFYLLRCGFLKEAVDFTEENRDLFEKVAEKFPFYINAYAKAPNGILPRQLRSQLFSEFNQTIRLQESSDPYKYAVYKIIGRCDLSKTSCPSICSVTEDYIWFQLILSREFTEKSVSAHEFFSLEDVQHILLSYGSDYFTNNGSNPVMYFFLLMLCGLYERAINFLYPYFPTDAVHFAITCAYYGLLRTAPSSSVVSNEPGKIQSMLVETKSGKPSLEFDRLLIDYTQTCQELSPVMSACYLIPMCKIDKYISMCHKSLCSLVLSTRDYVNLLGDIRGDGERTPSFLENHRSLIGLSSVKEYLSKITLTAAKQADDQGLLSDAILLYHLAEDYDAAVTVINRRLGSALLRFLDQFVFPDKLISLTKSMMDVYNRNPSLYAKVDYKNRETTNLLLLTVEAFNAYTNKDYEQALSSLQQLEILPLDPLDSDCETFVVRKLAKEFRFLNENLLQNVPGIVLIAMNSLKELYAKQKSSSFGNDAISVDKLRLYRQKARRIVMYSFLIEYRMPSQILEQLNRCEIEMT.

Belongs to the nucleoporin interacting component (NIC) family.

The protein resides in the nucleus envelope. Its function is as follows. Has a role in meiosis. The protein is Meiotically up-regulated gene 87 protein (mug87) of Schizosaccharomyces pombe (strain 972 / ATCC 24843) (Fission yeast).